A 1496-amino-acid chain; its full sequence is Rap guanine nucleotide exchange factor 2 (1496 aa).

Disordered stretches follow at residues 40–59 and 68–101; these read HVSSSHSGCSITSDSGSSSL and SEAGDMDLSGLPETAVDSEDDDDEEDIERASDPL. The span at 83–94 shows a compositional bias: acidic residues; it reads VDSEDDDDEEDI. 135–254 contacts a nucleoside 3',5'-cyclic phosphate; sequence AFANMTMSVR…VEEEGEIVMV (120 aa). One can recognise an N-terminal Ras-GEF domain in the interval 267–380; the sequence is KGHIVIKGTS…RLLNIACAAK (114 aa). Residues 385 to 470 form the PDZ domain; sequence LMTLTKPSRE…ITVKTNLFVF (86 aa). Serine 501 carries the phosphoserine modification. In terms of domain architecture, Ras-associating spans 606-692; that stretch reads PDQVLRVFKA…GRYYLKNNME (87 aa). A Phosphothreonine; by PLK2 modification is found at threonine 644. Residues 717 to 944 form the Ras-GEF domain; it reads STVEVATQLS…SQGSANATVL (228 aa). Serine 806 carries the post-translational modification Phosphoserine; by PLK2. Serine 930 is subject to Phosphoserine. A phosphoserine; by PLK2 mark is found at serine 933 and serine 1022. The tract at residues 1002–1051 is disordered; sequence PATSTLPKNPGDKKPVKSETSPVAPRAGPQQKVQPQQPLAQPQPPHKVSQ. The segment covering 1030-1041 has biased composition (low complexity); that stretch reads PQQKVQPQQPLA. Phosphoserine occurs at positions 1079, 1088, 1094, 1115, 1119, and 1158. Residues 1093–1159 are disordered; sequence GSLERHRKQA…RSSIVSNSSF (67 aa). Composition is skewed to low complexity over residues 1110–1124 and 1140–1159; these read SSQLSSPPTSPQSSP and SDSGHSEISSRSSIVSNSSF. Serine 1175 carries the post-translational modification Phosphoserine; by PLK2. Disordered regions lie at residues 1224 to 1256, 1303 to 1369, and 1390 to 1496; these read STEELSHDQGDRASLDAADSGRGSWTSCSSGSH, STKY…EEAK, and RKEG…VSAV. The segment covering 1227 to 1237 has biased composition (basic and acidic residues); it reads ELSHDQGDRAS. 2 stretches are compositionally biased toward polar residues: residues 1246–1256 and 1306–1330; these read GSWTSCSSGSH and YNRQNQSRESLEQAQSRASWASSTG. A compositionally biased stretch (low complexity) spans 1440–1455; it reads PTEAPAPGQTPPAAAA. The segment covering 1485-1496 has biased composition (acidic residues); sequence AEEDEDEQVSAV.

This sequence belongs to the RAPGEF2 family. As to quaternary structure, found in a complex, at least composed of KIDINS220, MAGI2, NTRK1 and RAPGEF2; the complex is mainly formed at late endosomes in a neuronal growth factor (NGF)-dependent manner. Interacts (via C-terminal domain) with NEDD4 (via WW domains); this interaction leads to ubiquitination and degradation via the proteasome pathway in a cAMP-independent manner. Interacts with MAGI1 (via PDZ domain). Interacts with ADRB1 (via C-terminal PDZ motif); the interaction is direct. Interacts (via Ras-associating domain) with RAP1A (via GTP-bound active form). Interacts weakly with HRAS (via GDP- and GTP-bound forms). Interacts (via C-terminal domain) with MAGI2 (via PDZ and WW domains). Interacts with CDH1, CTNNB1 and TJP1. Post-translationally, ubiquitinated by NEDD4, leading to proteasomal degradation. In terms of processing, phosphorylation by PLK2 promotes its activity. In terms of tissue distribution, expressed in all layers of the cerebral cortex, hippocampus and cerebellum. Expressed in the cortical plate, cingulate cortex and the subventricular zone. Expressed in neurons and endocrine cells (at protein level). Expressed in melanoma cells.

Its subcellular location is the cytoplasm. The protein resides in the perinuclear region. It is found in the cell membrane. It localises to the late endosome. The protein localises to the cell junction. Functionally, functions as a guanine nucleotide exchange factor (GEF), which activates Rap and Ras family of small GTPases by exchanging bound GDP for free GTP in a cAMP-dependent manner. Serves as a link between cell surface receptors and Rap/Ras GTPases in intracellular signaling cascades. Also acts as an effector for Rap1 by direct association with Rap1-GTP thereby leading to the amplification of Rap1-mediated signaling. Shows weak activity on HRAS. It is controversial whether RAPGEF2 binds cAMP and cGMP or not. Its binding to ligand-activated beta-1 adrenergic receptor ADRB1 leads to the Ras activation through the G(s)-alpha signaling pathway. Involved in the cAMP-induced Ras and Erk1/2 signaling pathway that leads to sustained inhibition of long term melanogenesis by reducing dendrite extension and melanin synthesis. Also provides inhibitory signals for cell proliferation of melanoma cells and promotes their apoptosis in a cAMP-independent nanner. Regulates cAMP-induced neuritogenesis by mediating the Rap1/B-Raf/ERK signaling through a pathway that is independent on both PKA and RAPGEF3/RAPGEF4. Involved in neuron migration and in the formation of the major forebrain fiber connections forming the corpus callosum, the anterior commissure and the hippocampal commissure during brain development. Involved in neuronal growth factor (NGF)-induced sustained activation of Rap1 at late endosomes and in brain-derived neurotrophic factor (BDNF)-induced axon outgrowth of hippocampal neurons. Plays a role in the regulation of embryonic blood vessel formation and in the establishment of basal junction integrity and endothelial barrier function. May be involved in the regulation of the vascular endothelial growth factor receptor KDR and cadherin CDH5 expression at allantois endothelial cell-cell junctions. This Mus musculus (Mouse) protein is Rap guanine nucleotide exchange factor 2 (Rapgef2).